An 813-amino-acid polypeptide reads, in one-letter code: Leucine--tRNA ligase (813 aa).

Residues 39 to 49 carry the 'HIGH' region motif; the sequence is PYPSGRIHMGH. Residues 582-586 carry the 'KMSKS' region motif; the sequence is KMSKS. Lys585 lines the ATP pocket.

This sequence belongs to the class-I aminoacyl-tRNA synthetase family.

It localises to the cytoplasm. The catalysed reaction is tRNA(Leu) + L-leucine + ATP = L-leucyl-tRNA(Leu) + AMP + diphosphate. This is Leucine--tRNA ligase from Campylobacter hominis (strain ATCC BAA-381 / DSM 21671 / CCUG 45161 / LMG 19568 / NCTC 13146 / CH001A).